The following is a 266-amino-acid chain: 3-methyl-2-oxobutanoate hydroxymethyltransferase (266 aa).

2 residues coordinate Mg(2+): Asp-45 and Asp-84. 3-methyl-2-oxobutanoate-binding positions include 45-46 (DS), Asp-84, and Lys-112. Glu-114 lines the Mg(2+) pocket. Glu-181 acts as the Proton acceptor in catalysis.

It belongs to the PanB family. As to quaternary structure, homodecamer; pentamer of dimers. Mg(2+) is required as a cofactor.

The protein resides in the cytoplasm. The catalysed reaction is 3-methyl-2-oxobutanoate + (6R)-5,10-methylene-5,6,7,8-tetrahydrofolate + H2O = 2-dehydropantoate + (6S)-5,6,7,8-tetrahydrofolate. It functions in the pathway cofactor biosynthesis; (R)-pantothenate biosynthesis; (R)-pantoate from 3-methyl-2-oxobutanoate: step 1/2. Catalyzes the reversible reaction in which hydroxymethyl group from 5,10-methylenetetrahydrofolate is transferred onto alpha-ketoisovalerate to form ketopantoate. The polypeptide is 3-methyl-2-oxobutanoate hydroxymethyltransferase (Pseudomonas savastanoi pv. phaseolicola (strain 1448A / Race 6) (Pseudomonas syringae pv. phaseolicola (strain 1448A / Race 6))).